Here is a 342-residue protein sequence, read N- to C-terminus: N-acetyl-gamma-glutamyl-phosphate reductase (342 aa).

C149 is a catalytic residue.

The protein belongs to the NAGSA dehydrogenase family. Type 1 subfamily.

The protein resides in the cytoplasm. It catalyses the reaction N-acetyl-L-glutamate 5-semialdehyde + phosphate + NADP(+) = N-acetyl-L-glutamyl 5-phosphate + NADPH + H(+). Its pathway is amino-acid biosynthesis; L-arginine biosynthesis; N(2)-acetyl-L-ornithine from L-glutamate: step 3/4. In terms of biological role, catalyzes the NADPH-dependent reduction of N-acetyl-5-glutamyl phosphate to yield N-acetyl-L-glutamate 5-semialdehyde. The chain is N-acetyl-gamma-glutamyl-phosphate reductase from Cereibacter sphaeroides (strain KD131 / KCTC 12085) (Rhodobacter sphaeroides).